Here is a 237-residue protein sequence, read N- to C-terminus: Putative glutathione-dependent formaldehyde-activating enzyme (237 aa).

Residues 38-152 (ITLICHCPPS…LGQSGGSEGE (115 aa)) enclose the CENP-V/GFA domain. Positions 42, 44, 67, 69, 72, 114, and 117 each coordinate Zn(2+).

The protein belongs to the Gfa family. The cofactor is Zn(2+).

The catalysed reaction is S-(hydroxymethyl)glutathione = glutathione + formaldehyde. It participates in one-carbon metabolism; formaldehyde degradation; formate from formaldehyde (glutathione route): step 1/3. Its function is as follows. Catalyzes the condensation of formaldehyde and glutathione to S-hydroxymethylglutathione. This Sordaria macrospora (strain ATCC MYA-333 / DSM 997 / K(L3346) / K-hell) protein is Putative glutathione-dependent formaldehyde-activating enzyme.